The following is a 570-amino-acid chain: Hydroxylamine reductase (570 aa).

Cys5, Cys8, Cys17, and Cys23 together coordinate [4Fe-4S] cluster. Hybrid [4Fe-2O-2S] cluster-binding residues include His266, Glu290, Cys334, Cys425, Cys453, Cys478, Glu513, and Lys515. A Cysteine persulfide modification is found at Cys425.

Belongs to the HCP family. [4Fe-4S] cluster serves as cofactor. Requires hybrid [4Fe-2O-2S] cluster as cofactor.

The protein resides in the cytoplasm. It catalyses the reaction A + NH4(+) + H2O = hydroxylamine + AH2 + H(+). Its function is as follows. Catalyzes the reduction of hydroxylamine to form NH(3) and H(2)O. This Clostridium botulinum (strain Kyoto / Type A2) protein is Hydroxylamine reductase.